The primary structure comprises 288 residues: MKHYDFHPLVGVGLRTPHLDFFQQQRPELSWLEIHSENYFQPNAAERKYLHTLREQYQISCHGIGLSLGSVERVSQVHLAQLKALIDAIDPMFVSDHLSWSENGGHYFNDLLPLPYTEEALNVFTRNVLEVQDYLQREILIENPSSYVKFQHSTISEWEFLAEVQQRTSCRLLLDLNNVHVSAFNHGFDCNTYLSAIPADKVDEIHLAGFTIKQLDKGEIWIDTHSRPVSTEVWKLYQHWIEQYGPRHTLIEWDLDIPAPEVLLAEAEKASLLLSQITTPLSATRKAS.

This sequence belongs to the UPF0276 family.

The protein is UPF0276 protein VP3015 of Vibrio parahaemolyticus serotype O3:K6 (strain RIMD 2210633).